A 433-amino-acid polypeptide reads, in one-letter code: MTDQDLLAQIELLKKENAQLKEKLKSQDDEQLSLEEYSRYGRQMIVEGTGGVVGQLRLKKAKVLVVGAGGLGSPSLPYLVGAGVGTIGIVDNDIVDTSNLHRQTIHNTAKVGMLKCESAKQVLKDLNPHVNINTYPVRLGPENAFSIFADYDIVMDCTDTPLTRYLISDVAVNLGKTVVSASGLGTEGQLTILNFNNIGPCYRCFYPVSPNPYAVSSCQEGGVIGPCIGLVGTMMAVETLKIIMGVYNNENFEPFLLSYSGFPIQSLRRFKMRGRQSKCQTCGDAPVITKEAIESGIIDYNIFCGSRNYNVCAEGERLTAKEFDENYGPEFSGNNKVLLDVRPSHHFDISHFNNAVNIPLKELRDMDGDISTLQSRIPNINKNSEVVVLCRYGNDSQLATRMLKDEFGITNVKDVAGGFFKYIDDVDQSIPKY.

ATP is bound by residues Gly-70, Asp-91, 98-102, Lys-115, and 159-160; these read SNLHR and DT. 2 residues coordinate Zn(2+): Cys-201 and Cys-204. The active-site Glycyl thioester intermediate; for adenylyltransferase activity is Cys-218. Residues Cys-279 and Cys-282 each coordinate Zn(2+). A Rhodanese domain is found at 332–431; sequence SGNNKVLLDV…YIDDVDQSIP (100 aa). Cys-390 serves as the catalytic Cysteine persulfide intermediate; for sulfurtransferase activity.

This sequence in the N-terminal section; belongs to the HesA/MoeB/ThiF family. UBA4 subfamily. Requires Zn(2+) as cofactor.

The protein localises to the cytoplasm. Its subcellular location is the cytosol. The protein operates within tRNA modification; 5-methoxycarbonylmethyl-2-thiouridine-tRNA biosynthesis. In terms of biological role, plays a central role in 2-thiolation of mcm(5)S(2)U at tRNA wobble positions of cytosolic tRNA(Lys), tRNA(Glu) and tRNA(Gln). Acts by mediating the C-terminal thiocarboxylation of sulfur carrier URM1. Its N-terminus first activates URM1 as acyl-adenylate (-COAMP), then the persulfide sulfur on the catalytic cysteine is transferred to URM1 to form thiocarboxylation (-COSH) of its C-terminus. The reaction probably involves hydrogen sulfide that is generated from the persulfide intermediate and that acts as a nucleophile towards URM1. Subsequently, a transient disulfide bond is formed. Does not use thiosulfate as sulfur donor; NFS1 probably acting as a sulfur donor for thiocarboxylation reactions. Prior mcm(5) tRNA modification by the elongator complex is required for 2-thiolation. May also be involved in protein urmylation. This is Adenylyltransferase and sulfurtransferase UBA4 from Candida glabrata (strain ATCC 2001 / BCRC 20586 / JCM 3761 / NBRC 0622 / NRRL Y-65 / CBS 138) (Yeast).